A 211-amino-acid chain; its full sequence is Heat shock 70 kDa protein 4L (211 aa).

Ser-161 bears the Phosphoserine mark.

Belongs to the heat shock protein 70 family. As to quaternary structure, homodimer.

Its subcellular location is the cytoplasm. The protein resides in the nucleus. In terms of biological role, possesses chaperone activity in vitro where it inhibits aggregation of citrate synthase. The sequence is that of Heat shock 70 kDa protein 4L from Mesocricetus auratus (Golden hamster).